Here is a 567-residue protein sequence, read N- to C-terminus: Geranylgeranyl transferase type-2 subunit alpha (567 aa).

PFTA repeat units follow at residues 44 to 78 (LDESVLELTSQILGANPDFATLWNCRREVLQQLET), 88 to 122 (LVKAELGFLESCLRVNPKSYGTWHHRCWLLGRLPE), 124 to 158 (NWTRELELCARFLEVDERNFHCWDYRRFVATQAAV), 159 to 193 (PPAEELAFTDSLITRNFSNYSSWHYRSCLLPQLHP), 207 to 241 (VLLKELELVQNAFFTDPNDQSAWFYHRWLLGRADP), and 363 to 397 (VLQSELESCKELQELEPENKWCLLTIILLMRALDP). S98 carries the post-translational modification Phosphoserine. LRR repeat units lie at residues 442 to 463 (EVRVLHLAHKDLTVLCHLEQLL), 464 to 486 (LVTHLDLSHNRLRTLPPALAALR), 487 to 508 (CLEVLQASDNAIESLDGVTNLP), 509 to 530 (RLQELLLCNNRLQRPAVLQPLA), and 534 to 555 (RLVLLNLQGNPLCQAVGILEQL).

It belongs to the protein prenyltransferase subunit alpha family. As to quaternary structure, heterotrimer composed of RABGGTA, RABGGTB and CHM; within this trimer, RABGGTA and RABGGTB form the catalytic component B, while CHM (component A) mediates peptide substrate binding. The Rab GGTase dimer (RGGT) interacts with CHM (component A) prior to Rab protein binding; the association is stabilized by geranylgeranyl pyrophosphate (GGpp). The CHM:RGGT:Rab complex is destabilized by GGpp. Interacts with non-phosphorylated form of RAB8A; phosphorylation of RAB8A at 'Thr-72' disrupts this interaction.

It carries out the reaction geranylgeranyl diphosphate + L-cysteinyl-[protein] = S-geranylgeranyl-L-cysteinyl-[protein] + diphosphate. Its activity is regulated as follows. The enzymatic reaction requires the aid of a Rab escort protein (also called component A), such as CHM. Its function is as follows. Catalyzes the transfer of a geranylgeranyl moiety from geranylgeranyl diphosphate to both cysteines of Rab proteins with the C-terminal sequence -XXCC, -XCXC and -CCXX, such as RAB1A, RAB3A, RAB5A and RAB7A. This is Geranylgeranyl transferase type-2 subunit alpha (RABGGTA) from Pongo abelii (Sumatran orangutan).